Consider the following 125-residue polypeptide: TSSK6-activating co-chaperone protein (125 aa).

The segment at 1–22 (MEQLPSHPTNRRAKEEGNAVPL) is disordered.

Belongs to the TSACC family. Interacts with HSP70. Associates with HSP90. Interacts with TSSK6; this interaction is direct and recruits TSACC to HSP90.

Co-chaperone that facilitates HSP-mediated activation of TSSK6. This is TSSK6-activating co-chaperone protein (TSACC) from Bos taurus (Bovine).